We begin with the raw amino-acid sequence, 702 residues long: Phosphatase and actin regulator 4 (702 aa).

Disordered regions lie at residues 1–38, 82–194, and 222–363; these read MEDP…SKFS, GVLL…SSGG, and NLSV…PFPA. One copy of the RPEL 1 repeat lies at 63–88; it reads EVLERKISMRKPREELVKRGVLLEDP. The span at 106-120 shows a compositional bias: polar residues; the sequence is GHTTPIGNARSSSPV. A phosphoserine mark is found at Ser116, Ser118, Ser131, and Ser147. Polar residues predominate over residues 147–156; the sequence is STGSQPNSEA. The segment covering 163 to 173 has biased composition (pro residues); the sequence is VPKPPLLPPKR. A compositionally biased stretch (low complexity) spans 233–250; it reads TLPAAPASTNTTATPSLT. Phosphoserine occurs at positions 270 and 291. Residues 301 to 318 are compositionally biased toward polar residues; it reads PSTSVPTLESAAAITTKT. 2 positions are modified to phosphoserine: Ser342 and Ser344. Positions 342 to 362 are enriched in pro residues; it reads SPSPPLPTHIPPEPPRTPPFP. The residue at position 358 (Thr358) is a Phosphothreonine. Ser427 carries the post-translational modification Phosphoserine. A Phosphothreonine modification is found at Thr432. Phosphoserine occurs at positions 443, 453, and 464. A disordered region spans residues 473 to 536; the sequence is KVPDDEEEEE…EEDEDESYQS (64 aa). Positions 486 to 497 are enriched in low complexity; sequence PSTFSEETTPTS. Acidic residues predominate over residues 508–518; that stretch reads EEEEKESDSDS. Residues Ser514, Ser516, Ser557, and Ser590 each carry the phosphoserine modification. 2 RPEL repeats span residues 583–608 and 621–646; these read NTLI…QPKN and RRLT…RFNE. Residues 592 to 615 are disordered; that stretch reads RPTPEELEQRNILQPKNEADRQAE. Ser628 carries the post-translational modification Phosphoserine.

This sequence belongs to the phosphatase and actin regulator family. Binds PPP1CA and actin.

Its subcellular location is the cytoplasm. The protein localises to the cell projection. It localises to the lamellipodium. Functionally, regulator of protein phosphatase 1 (PP1) required for neural tube and optic fissure closure, and enteric neural crest cell (ENCCs) migration during development. Acts as an activator of PP1 by interacting with PPP1CA and preventing phosphorylation of PPP1CA at 'Thr-320'. During neural tube closure, localizes to the ventral neural tube and activates PP1, leading to down-regulate cell proliferation within cranial neural tissue and the neural retina. Also acts as a regulator of migration of enteric neural crest cells (ENCCs) by activating PP1, leading to dephosphorylation and subsequent activation of cofilin (COF1 or COF2) and repression of the integrin signaling through the RHO/ROCK pathway. This chain is Phosphatase and actin regulator 4 (PHACTR4), found in Pongo abelii (Sumatran orangutan).